A 319-amino-acid polypeptide reads, in one-letter code: HTH-type transcriptional regulator YidZ (319 aa).

An HTH lysR-type domain is found at 8–65 (LDLNLLLCLQLLMQERSVTKAAKRMNVTPSAVSKSLAKLRAWFDDPLFVNTPLGLAPT). Residues 25 to 44 (VTKAAKRMNVTPSAVSKSLA) constitute a DNA-binding region (H-T-H motif).

This sequence belongs to the LysR transcriptional regulatory family.

Functionally, involved in anaerobic NO protection. In Salmonella heidelberg (strain SL476), this protein is HTH-type transcriptional regulator YidZ.